A 656-amino-acid polypeptide reads, in one-letter code: Chaperone protein HtpG (656 aa).

Positions 1–359 are a; substrate-binding; that stretch reads MSAQVEQLEF…AEDMSLNVSR (359 aa). Positions 360 to 575 are b; the sequence is EILQQNRQIN…AFGITPALAR (216 aa). Residues 576–656 form a c region; the sequence is IYRASGQDVP…LLADLLSRSM (81 aa).

This sequence belongs to the heat shock protein 90 family. As to quaternary structure, homodimer.

The protein resides in the cytoplasm. Molecular chaperone. Has ATPase activity. The sequence is that of Chaperone protein HtpG from Mycobacterium leprae (strain TN).